Consider the following 513-residue polypeptide: ATP synthase subunit alpha (513 aa).

169–176 (GDRQTGKT) is a binding site for ATP.

The protein belongs to the ATPase alpha/beta chains family. F-type ATPases have 2 components, CF(1) - the catalytic core - and CF(0) - the membrane proton channel. CF(1) has five subunits: alpha(3), beta(3), gamma(1), delta(1), epsilon(1). CF(0) has three main subunits: a(1), b(2) and c(9-12). The alpha and beta chains form an alternating ring which encloses part of the gamma chain. CF(1) is attached to CF(0) by a central stalk formed by the gamma and epsilon chains, while a peripheral stalk is formed by the delta and b chains.

The protein localises to the cell inner membrane. The catalysed reaction is ATP + H2O + 4 H(+)(in) = ADP + phosphate + 5 H(+)(out). In terms of biological role, produces ATP from ADP in the presence of a proton gradient across the membrane. The alpha chain is a regulatory subunit. This is ATP synthase subunit alpha from Tolumonas auensis (strain DSM 9187 / NBRC 110442 / TA 4).